A 362-amino-acid chain; its full sequence is Microfibril-associated glycoprotein 3 (362 aa).

Residues 1-19 form the signal peptide; the sequence is MKLHCCLFTLVASIIVPAA. At 20–146 the chain is on the extracellular side; the sequence is FVLEDVDFNQ…TLRVIFTSGD (127 aa). Asparagine 36, asparagine 41, and asparagine 110 each carry an N-linked (GlcNAc...) asparagine glycan. An Ig-like C2-type domain is found at 45 to 137; the sequence is PSSFELSASS…SPIRASYSVT (93 aa). A disulfide bond links cysteine 73 and cysteine 124. Residues 147-167 traverse the membrane as a helical segment; it reads MSVYYMIVCLIAFTITLILNV. Residues 168-362 lie on the Cytoplasmic side of the membrane; that stretch reads TRLCMMSSHL…KDGAYENSQL (195 aa). 2 disordered regions span residues 282–306 and 319–362; these read GIYV…GSLN and HLQS…NSQL. Polar residues predominate over residues 319 to 337; the sequence is HLQSETKSIDTESQGSSHF.

Glycosylated.

It localises to the cell membrane. Component of the elastin-associated microfibrils. The polypeptide is Microfibril-associated glycoprotein 3 (MFAP3) (Pongo abelii (Sumatran orangutan)).